An 873-amino-acid chain; its full sequence is Serine/threonine-protein phosphatase 4 regulatory subunit 4 (873 aa).

HEAT repeat units follow at residues 213 to 251, 252 to 290, and 392 to 427; these read ILPL…TKSV, VLPE…RSQT, and NFHM…SKLL. Residues 686-720 adopt a coiled-coil conformation; it reads QKKFYEKDLLDQEKEREELLLLEMEQLEKEKQQND. The segment covering 713–737 has biased composition (basic and acidic residues); it reads EKEKQQNDGRPMSDKMFEKKRRDTK. Residues 713-766 are disordered; it reads EKEKQQNDGRPMSDKMFEKKRRDTKTPTQSLPKNIPISVPGPSSVTPSTSKEIK. Residues 747-762 are compositionally biased toward low complexity; it reads IPISVPGPSSVTPSTS. S775 carries the phosphoserine modification. T797 carries the post-translational modification Phosphothreonine. Positions 822–858 are enriched in polar residues; sequence TRNASSVPSSFSPNTPLPSTSRGTGNSVDPKSSGSKD. The tract at residues 822 to 873 is disordered; the sequence is TRNASSVPSSFSPNTPLPSTSRGTGNSVDPKSSGSKDTQPRKATLKSRKSNP. Over residues 864–873 the composition is skewed to basic residues; the sequence is ATLKSRKSNP.

Serine/threonine-protein phosphatase 4 (PP4) occurs in different assemblies of the catalytic and one or more regulatory subunits. Component of the PP4 complex PPP4C-PPP4R4.

Its subcellular location is the cytoplasm. Putative regulatory subunit of serine/threonine-protein phosphatase 4. This Homo sapiens (Human) protein is Serine/threonine-protein phosphatase 4 regulatory subunit 4 (PPP4R4).